The chain runs to 215 residues: Pyridoxine/pyridoxamine 5'-phosphate oxidase (215 aa).

Residues Arg-9–Tyr-12 and Lys-69 each bind substrate. FMN-binding positions include Arg-64–Lys-69, Phe-79–Thr-80, Lys-86, and Gln-108. Substrate contacts are provided by Tyr-126, Arg-130, and Ser-134. Residues Gln-143–Ser-144 and Trp-188 contribute to the FMN site. Arg-194–His-196 lines the substrate pocket. Arg-198 is an FMN binding site.

The protein belongs to the pyridoxamine 5'-phosphate oxidase family. In terms of assembly, homodimer. Requires FMN as cofactor.

The catalysed reaction is pyridoxamine 5'-phosphate + O2 + H2O = pyridoxal 5'-phosphate + H2O2 + NH4(+). The enzyme catalyses pyridoxine 5'-phosphate + O2 = pyridoxal 5'-phosphate + H2O2. It participates in cofactor metabolism; pyridoxal 5'-phosphate salvage; pyridoxal 5'-phosphate from pyridoxamine 5'-phosphate: step 1/1. Its pathway is cofactor metabolism; pyridoxal 5'-phosphate salvage; pyridoxal 5'-phosphate from pyridoxine 5'-phosphate: step 1/1. Catalyzes the oxidation of either pyridoxine 5'-phosphate (PNP) or pyridoxamine 5'-phosphate (PMP) into pyridoxal 5'-phosphate (PLP). In Pseudomonas savastanoi pv. phaseolicola (strain 1448A / Race 6) (Pseudomonas syringae pv. phaseolicola (strain 1448A / Race 6)), this protein is Pyridoxine/pyridoxamine 5'-phosphate oxidase.